Consider the following 540-residue polypeptide: CTP synthase (540 aa).

Residues 1–264 form an amidoligase domain region; it reads MQYIVVTGGV…ISYLSKLSGK (264 aa). CTP is bound at residue S12. Residue S12 coordinates UTP. ATP is bound at residue 13-18; it reads GLGKGT. Y53 serves as a coordination point for L-glutamine. Residue D70 coordinates ATP. Positions 70 and 140 each coordinate Mg(2+). CTP-binding positions include 147 to 149, 185 to 190, and R221; these read DIE and KTKPTQ. Residues 185–190 and R221 each bind UTP; that span reads KTKPTQ. The Glutamine amidotransferase type-1 domain occupies 294–527; that stretch reads YVDLHDAYIS…VQQALIYKKN (234 aa). Residue G347 participates in L-glutamine binding. Catalysis depends on C374, which acts as the Nucleophile; for glutamine hydrolysis. L-glutamine contacts are provided by residues 375–378, E398, and R455; that span reads LGFQ. Catalysis depends on residues H500 and E502.

This sequence belongs to the CTP synthase family. Homotetramer.

The enzyme catalyses UTP + L-glutamine + ATP + H2O = CTP + L-glutamate + ADP + phosphate + 2 H(+). It catalyses the reaction L-glutamine + H2O = L-glutamate + NH4(+). The catalysed reaction is UTP + NH4(+) + ATP = CTP + ADP + phosphate + 2 H(+). It participates in pyrimidine metabolism; CTP biosynthesis via de novo pathway; CTP from UDP: step 2/2. Allosterically activated by GTP, when glutamine is the substrate; GTP has no effect on the reaction when ammonia is the substrate. The allosteric effector GTP functions by stabilizing the protein conformation that binds the tetrahedral intermediate(s) formed during glutamine hydrolysis. Inhibited by the product CTP, via allosteric rather than competitive inhibition. In terms of biological role, catalyzes the ATP-dependent amination of UTP to CTP with either L-glutamine or ammonia as the source of nitrogen. Regulates intracellular CTP levels through interactions with the four ribonucleotide triphosphates. The protein is CTP synthase of Thermoplasma volcanium (strain ATCC 51530 / DSM 4299 / JCM 9571 / NBRC 15438 / GSS1).